We begin with the raw amino-acid sequence, 172 residues long: Bacilliredoxin SRU_0242 (172 aa).

The segment at 141-172 (TDEAPPSDAPSRPDLSSSPNAGGLPSTFQSIS) is disordered. Positions 154–172 (DLSSSPNAGGLPSTFQSIS) are enriched in polar residues.

The protein belongs to the bacilliredoxin family.

The protein is Bacilliredoxin SRU_0242 of Salinibacter ruber (strain DSM 13855 / M31).